A 294-amino-acid polypeptide reads, in one-letter code: Protein CHLOROPLAST J-LIKE DOMAIN 1, chloroplastic (294 aa).

The transit peptide at 1-58 directs the protein to the chloroplast; it reads MAPALSTSCSSVMAFSTSNALRYHHPQISLRNSLRAPKSPSFVRLPLGKVLQSRIVIR. Over 59–164 the chain is Stromal; it reads AASSAAGNPQ…GPRFSRSSKN (106 aa). The segment at 74–152 is J-like domain; that stretch reads NPYEVLGVNP…IKYADKQPII (79 aa). Residues 165–182 traverse the membrane as a helical segment; it reads DMLINLAISVVFSAWIAI. Over 183–233 the chain is Chloroplast intermembrane; that stretch reads KRNVEYKPLQFMSFVFVYRIFEKLKSFEAPSSPIYNEEGEESGRGLRMGKR. The chain crosses the membrane as a helical span at residues 234 to 256; it reads LLRSLSLVFGSILLASLAYTGFL. At 257 to 275 the chain is on the stromal side; sequence NGIEYMGYSIPMVLYNNQE. Residues 276–293 form a helical membrane-spanning segment; that stretch reads LIVTASSAFMLYVIASFY. Residue Arg-294 is a topological domain, chloroplast intermembrane.

In terms of assembly, interacts (via J-like domain) with ARC6 (via J domain).

The protein resides in the plastid. It localises to the chloroplast inner membrane. Its function is as follows. Probably involved in the regulation of the fatty acid metabolic process in chloroplasts, especially chloroplastic galactolipids monogalactosyldiacylglycerol (MGDG) and digalactosyldiacylglycerol (DGDG). In Arabidopsis thaliana (Mouse-ear cress), this protein is Protein CHLOROPLAST J-LIKE DOMAIN 1, chloroplastic.